Reading from the N-terminus, the 177-residue chain is uncharacterized protein (177 aa).

The protein localises to the plastid. The protein resides in the chloroplast. This is an uncharacterized protein from Chlorella vulgaris (Green alga).